Consider the following 191-residue polypeptide: Inosine triphosphate pyrophosphatase (191 aa).

Residue 15–20 (TGNANK) participates in ITP binding. E43 provides a ligand contact to Mg(2+). ITP is bound by residues K55, 71 to 72 (DT), K88, 147 to 150 (FGWD), K168, and 173 to 174 (HR).

Belongs to the HAM1 NTPase family. Homodimer. It depends on Mg(2+) as a cofactor. Requires Mn(2+) as cofactor.

The protein localises to the cytoplasm. The protein resides in the nucleus. The catalysed reaction is ITP + H2O = IMP + diphosphate + H(+). The enzyme catalyses dITP + H2O = dIMP + diphosphate + H(+). It carries out the reaction XTP + H2O = XMP + diphosphate + H(+). Functionally, pyrophosphatase that hydrolyzes non-canonical purine nucleotides such as inosine triphosphate (ITP), deoxyinosine triphosphate (dITP) or xanthosine 5'-triphosphate (XTP) to their respective monophosphate derivatives. The enzyme does not distinguish between the deoxy- and ribose forms. Probably excludes non-canonical purines from RNA and DNA precursor pools, thus preventing their incorporation into RNA and DNA and avoiding chromosomal lesions. This chain is Inosine triphosphate pyrophosphatase, found in Neurospora crassa (strain ATCC 24698 / 74-OR23-1A / CBS 708.71 / DSM 1257 / FGSC 987).